We begin with the raw amino-acid sequence, 115 residues long: Large ribosomal subunit protein bL20c (115 aa).

The protein belongs to the bacterial ribosomal protein bL20 family.

The protein localises to the plastid. The protein resides in the chloroplast. In terms of biological role, binds directly to 23S ribosomal RNA and is necessary for the in vitro assembly process of the 50S ribosomal subunit. It is not involved in the protein synthesizing functions of that subunit. The chain is Large ribosomal subunit protein bL20c (rpl20) from Chlorella vulgaris (Green alga).